Here is a 726-residue protein sequence, read N- to C-terminus: Tripartite terminase subunit 1 (726 aa).

The C3H1-type zinc finger occupies 189-217; the sequence is CMKCYEELTLTPNQGKSLRRRLHGKFCNH. ATP is bound at residue 626–633; sequence YNDVFGKR.

It belongs to the herpesviridae TRM1 protein family. As to quaternary structure, associates with TRM2 and TRM3 to form the tripartite terminase complex. Interacts with portal protein.

The protein resides in the host nucleus. Component of the molecular motor that translocates viral genomic DNA in empty capsid during DNA packaging. Forms a tripartite terminase complex together with TRM2 and TRM3 in the host cytoplasm. Once the complex reaches the host nucleus, it interacts with the capsid portal vertex. This portal forms a ring in which genomic DNA is translocated into the capsid. TRM1 carries an endonuclease activity that plays an important role for the cleavage of concatemeric viral DNA into unit length genomes. The sequence is that of Tripartite terminase subunit 1 from Homo sapiens (Human).